The sequence spans 595 residues: MGESLNGLKRTIMCGEIRENHIGNRVVVMGWVQRKRNLGGLVFVDLRDREGILQVVFGEEINKDAFMKADLVKSEYCISVSGTLVKRESPNPNMPTGMVELKGEEIKILSESETPPIYIKENLDAAENIRLRYRYLDLRRPDMQKIFKIRHKTTKIIRDFMDEENFLEMETPILTKSTPEGARDYLVPSRNYNGKFYALPQSPQLFKQLLMVSGYDKYFQIAKCFRDEDLRANRQPEFTQVDMEMSFVEEDDVIELNERLIQKVFKEMAGVEVKLPIERMTWKTAMEKYGSDKPDLRFGMEINDISEAVSTSDFKVFKSAIEEGGSVRAIKAPNSADMPRKKIDKLGEFVKTYKAKGLAWIALKEDGIKSPIAKFLKEEELKAIIDKVQGKTGDLILIVADKNSVVFQSLGALRLEIAKELEILKDNKEFRFVWITEFPLLSYNEEEERFQAEHHPFTMPMDEDIEYLESDPGRVRAKAYDIVLNGEELGGGSVRIHDTALQERMFKVLGFTKESAWERFSFLLEAFKFGPPPHAGLAYGLDRLIMFLAGTENIKDVIAFPKNQNAFCPLTEAPNVVDENQIEELGIKVESKEEE.

An L-aspartate-binding site is contributed by E180. Residues 204–207 (QLFK) form an aspartate region. R226 provides a ligand contact to L-aspartate. Residues 226–228 (RDE) and Q235 contribute to the ATP site. H454 is a binding site for L-aspartate. E488 contributes to the ATP binding site. An L-aspartate-binding site is contributed by R495. Residue 540 to 543 (GLDR) participates in ATP binding.

The protein belongs to the class-II aminoacyl-tRNA synthetase family. Type 1 subfamily. As to quaternary structure, homodimer.

Its subcellular location is the cytoplasm. The catalysed reaction is tRNA(Asp) + L-aspartate + ATP = L-aspartyl-tRNA(Asp) + AMP + diphosphate. In terms of biological role, catalyzes the attachment of L-aspartate to tRNA(Asp) in a two-step reaction: L-aspartate is first activated by ATP to form Asp-AMP and then transferred to the acceptor end of tRNA(Asp). The sequence is that of Aspartate--tRNA ligase from Clostridium acetobutylicum (strain ATCC 824 / DSM 792 / JCM 1419 / IAM 19013 / LMG 5710 / NBRC 13948 / NRRL B-527 / VKM B-1787 / 2291 / W).